The primary structure comprises 390 residues: GDSL esterase/lipase At1g28640 (390 aa).

Residues 1–26 form the signal peptide; that stretch reads MASSLEKLISSFLLVLYSTTIIVASS. S42 functions as the Nucleophile in the catalytic mechanism. Residues N105, N138, and N321 are each glycosylated (N-linked (GlcNAc...) asparagine). Active-site residues include D346 and H349. N-linked (GlcNAc...) asparagine glycosylation is present at N364.

This sequence belongs to the 'GDSL' lipolytic enzyme family.

The protein resides in the secreted. The sequence is that of GDSL esterase/lipase At1g28640 from Arabidopsis thaliana (Mouse-ear cress).